The following is a 161-amino-acid chain: S-ribosylhomocysteine lyase (161 aa).

3 residues coordinate Fe cation: His-57, His-61, and Cys-124.

The protein belongs to the LuxS family. Homodimer. Fe cation is required as a cofactor.

The catalysed reaction is S-(5-deoxy-D-ribos-5-yl)-L-homocysteine = (S)-4,5-dihydroxypentane-2,3-dione + L-homocysteine. In terms of biological role, involved in the synthesis of autoinducer 2 (AI-2) which is secreted by bacteria and is used to communicate both the cell density and the metabolic potential of the environment. The regulation of gene expression in response to changes in cell density is called quorum sensing. Catalyzes the transformation of S-ribosylhomocysteine (RHC) to homocysteine (HC) and 4,5-dihydroxy-2,3-pentadione (DPD). In Macrococcus caseolyticus (strain JCSC5402) (Macrococcoides caseolyticum), this protein is S-ribosylhomocysteine lyase.